A 131-amino-acid chain; its full sequence is Large ribosomal subunit protein bL17 (131 aa).

Belongs to the bacterial ribosomal protein bL17 family. As to quaternary structure, part of the 50S ribosomal subunit. Contacts protein L32.

This is Large ribosomal subunit protein bL17 from Burkholderia multivorans (strain ATCC 17616 / 249).